The sequence spans 166 residues: Bacterial non-heme ferritin (166 aa).

The Ferritin-like diiron domain maps to 2 to 145 (LSKNLLEALN…THINYLTRIG (144 aa)). Residues Glu17, Glu50, His53, Glu94, and Gln127 each coordinate Fe cation.

This sequence belongs to the ferritin family. Prokaryotic subfamily.

It is found in the cytoplasm. The enzyme catalyses 4 Fe(2+) + O2 + 6 H2O = 4 iron(III) oxide-hydroxide + 12 H(+). Iron-storage protein. The chain is Bacterial non-heme ferritin (ftnA) from Staphylococcus aureus (strain USA300).